We begin with the raw amino-acid sequence, 25 residues long: Bombinin-like peptide 4 (25 aa).

At Phe25 the chain carries Phenylalanine amide.

It belongs to the bombinin family. In terms of tissue distribution, expressed by the skin glands.

Its subcellular location is the secreted. Has antimicrobial activity, but no hemolytic activity. Preference on killing Gram-negative non-enteric bacteria. The protein is Bombinin-like peptide 4 of Bombina orientalis (Oriental fire-bellied toad).